Reading from the N-terminus, the 476-residue chain is Adenosylhomocysteinase (476 aa).

Residues threonine 61, aspartate 140, and glutamate 200 each coordinate substrate. Residue threonine 201–threonine 203 participates in NAD(+) binding. Substrate is bound by residues lysine 230 and aspartate 234. Residues asparagine 235, glycine 264–glycine 269, glutamate 287, asparagine 322, isoleucine 343–histidine 345, and asparagine 389 contribute to the NAD(+) site.

The protein belongs to the adenosylhomocysteinase family. NAD(+) serves as cofactor.

Its subcellular location is the cytoplasm. The enzyme catalyses S-adenosyl-L-homocysteine + H2O = L-homocysteine + adenosine. Its pathway is amino-acid biosynthesis; L-homocysteine biosynthesis; L-homocysteine from S-adenosyl-L-homocysteine: step 1/1. Its function is as follows. May play a key role in the regulation of the intracellular concentration of adenosylhomocysteine. The sequence is that of Adenosylhomocysteinase from Acidovorax sp. (strain JS42).